The sequence spans 139 residues: MPTINQLVRKPRQSKITKSKSPALNKGYNSFKKSLTDVKSPQKRGVCTRVGTMTPRKPNSALRKYARVRLTNQIEVTAYIPGEGHNLQEHSVVLIRGGRVKDLAGVRYHIVRGALDTAGVNGRLQSRSKYGTKRPKEKK.

The segment at 1-44 is disordered; the sequence is MPTINQLVRKPRQSKITKSKSPALNKGYNSFKKSLTDVKSPQKR. The span at 9–18 shows a compositional bias: basic residues; it reads RKPRQSKITK. Over residues 19-39 the composition is skewed to polar residues; it reads SKSPALNKGYNSFKKSLTDVK. Asp-102 carries the post-translational modification 3-methylthioaspartic acid.

The protein belongs to the universal ribosomal protein uS12 family. In terms of assembly, part of the 30S ribosomal subunit. Contacts proteins S8 and S17. May interact with IF1 in the 30S initiation complex.

Functionally, with S4 and S5 plays an important role in translational accuracy. In terms of biological role, interacts with and stabilizes bases of the 16S rRNA that are involved in tRNA selection in the A site and with the mRNA backbone. Located at the interface of the 30S and 50S subunits, it traverses the body of the 30S subunit contacting proteins on the other side and probably holding the rRNA structure together. The combined cluster of proteins S8, S12 and S17 appears to hold together the shoulder and platform of the 30S subunit. This chain is Small ribosomal subunit protein uS12, found in Lysinibacillus sphaericus (strain C3-41).